The sequence spans 969 residues: RNA polymerase-associated protein RapA (969 aa).

The Helicase ATP-binding domain occupies 164–334; sequence EVGRRHAPRV…FARLRLLDSD (171 aa). 177–184 contacts ATP; the sequence is DEVGLGKT. The DEAH box signature appears at 280 to 283; that stretch reads DEAH. In terms of domain architecture, Helicase C-terminal spans 492-668; the sequence is RVNWLLEKLK…GSNEALDDVI (177 aa).

This sequence belongs to the SNF2/RAD54 helicase family. RapA subfamily. Interacts with the RNAP. Has a higher affinity for the core RNAP than for the holoenzyme. Its ATPase activity is stimulated by binding to RNAP.

In terms of biological role, transcription regulator that activates transcription by stimulating RNA polymerase (RNAP) recycling in case of stress conditions such as supercoiled DNA or high salt concentrations. Probably acts by releasing the RNAP, when it is trapped or immobilized on tightly supercoiled DNA. Does not activate transcription on linear DNA. Probably not involved in DNA repair. This Vibrio vulnificus (strain CMCP6) protein is RNA polymerase-associated protein RapA.